A 456-amino-acid chain; its full sequence is tRNA modification GTPase MnmE (456 aa).

(6S)-5-formyl-5,6,7,8-tetrahydrofolate contacts are provided by Arg24, Glu81, and Lys120. A TrmE-type G domain is found at 216 to 379; that stretch reads GMTVVIAGRP…LRDHLKGCMG (164 aa). Asn226 contacts K(+). GTP is bound by residues 226-231, 245-251, 270-273, and 335-338; these read NAGKSS, TDIAGTT, DTAG, and NKAD. Residue Ser230 coordinates Mg(2+). K(+) is bound by residues Thr245, Ile247, and Thr250. Thr251 provides a ligand contact to Mg(2+). Lys456 lines the (6S)-5-formyl-5,6,7,8-tetrahydrofolate pocket.

Belongs to the TRAFAC class TrmE-Era-EngA-EngB-Septin-like GTPase superfamily. TrmE GTPase family. Homodimer. Heterotetramer of two MnmE and two MnmG subunits. The cofactor is K(+).

It is found in the cytoplasm. Its function is as follows. Exhibits a very high intrinsic GTPase hydrolysis rate. Involved in the addition of a carboxymethylaminomethyl (cmnm) group at the wobble position (U34) of certain tRNAs, forming tRNA-cmnm(5)s(2)U34. The chain is tRNA modification GTPase MnmE from Pseudomonas putida (strain ATCC 47054 / DSM 6125 / CFBP 8728 / NCIMB 11950 / KT2440).